Consider the following 477-residue polypeptide: Argininosuccinate lyase (477 aa).

It belongs to the lyase 1 family. Argininosuccinate lyase subfamily.

Its subcellular location is the cytoplasm. The enzyme catalyses 2-(N(omega)-L-arginino)succinate = fumarate + L-arginine. Its pathway is amino-acid biosynthesis; L-arginine biosynthesis; L-arginine from L-ornithine and carbamoyl phosphate: step 3/3. This is Argininosuccinate lyase from Corynebacterium diphtheriae (strain ATCC 700971 / NCTC 13129 / Biotype gravis).